The following is a 476-amino-acid chain: tRNA(Ile)-lysidine synthase (476 aa).

ATP is bound at residue 30-35 (SGGPDS).

This sequence belongs to the tRNA(Ile)-lysidine synthase family.

It is found in the cytoplasm. It carries out the reaction cytidine(34) in tRNA(Ile2) + L-lysine + ATP = lysidine(34) in tRNA(Ile2) + AMP + diphosphate + H(+). Ligates lysine onto the cytidine present at position 34 of the AUA codon-specific tRNA(Ile) that contains the anticodon CAU, in an ATP-dependent manner. Cytidine is converted to lysidine, thus changing the amino acid specificity of the tRNA from methionine to isoleucine. This Bacillus thuringiensis subsp. konkukian (strain 97-27) protein is tRNA(Ile)-lysidine synthase.